The following is a 594-amino-acid chain: MDFQSKKLINDPNDVVTEFIEGLIENYPGLQYLDGFPEVKVVLRADVSGAKYDKVAIISGGGSGHEPAHAGFVGEGMLTAAICGDVFASPNVDSILAGIRAVTGPMGCLLIVKNYTGDRLNFGLAAEQAKSEGYKVEMVIVGDDCALPPPRGIAGRRGLAGTLLVHKVAGAAAACGLPLADVAAEAKRASEMVGTMGVALSVCTSPGQVTSDRLGPGKMELGLGIHGEPGAAVADLQPVDVVVSHVLKEILSPETNYVPITRGSRVVLLINGLGATPLMELMIIAGKAVPELQLEHGLAVDRVYTGSFMTSLDMAGFSISVMKADQAILDRLDAPTKAPNWPVGAEGNRPPAKIPVPLPPSHSIKIEKTLSRPEKLSPQGHILETAIEAAATEVVNLRDNLNEWDNKVGDGDCGSTMFRGAVAILEDMKKYYPLNDPAETVNEIGASIGRVMGGTSGILYSIFCKAAYAKLKENAESVVTAIHWADALEAAIAAVSKYGGASAGYRTLLDALIPALSALKERLNAGDDPADAFIISAEAASAGAESTKHMQAQAGRSTYVPGDILASVPDPGAMAAAAWYRAAALAVKEKYNTA.

In terms of domain architecture, DhaK spans 11–341 (DPNDVVTEFI…LDAPTKAPNW (331 aa)). Substrate-binding positions include 62–65 (GSGH), Lys113, and Asp118. His226 (tele-hemiaminal-histidine intermediate) is an active-site residue. Residues 339–358 (PNWPVGAEGNRPPAKIPVPL) are disordered. One can recognise a DhaL domain in the interval 381 to 585 (HILETAIEAA…AAAWYRAAAL (205 aa)). ATP-binding positions include 410 to 413 (DGDC), 455 to 456 (TS), Gly499, 507 to 508 (TL), and 570 to 572 (DPG).

This sequence belongs to the dihydroxyacetone kinase (DAK) family.

The sequence is that of Putative 3,4-dihydroxy-2-butanone kinase (DHBK) from Solanum lycopersicum (Tomato).